We begin with the raw amino-acid sequence, 530 residues long: Glucose-6-phosphate isomerase (530 aa).

The Proton donor role is filled by Glu-347. Residues His-378 and Lys-493 contribute to the active site.

Belongs to the GPI family.

It localises to the cytoplasm. The catalysed reaction is alpha-D-glucose 6-phosphate = beta-D-fructose 6-phosphate. It participates in carbohydrate biosynthesis; gluconeogenesis. The protein operates within carbohydrate degradation; glycolysis; D-glyceraldehyde 3-phosphate and glycerone phosphate from D-glucose: step 2/4. Catalyzes the reversible isomerization of glucose-6-phosphate to fructose-6-phosphate. In Chlamydia abortus (strain DSM 27085 / S26/3) (Chlamydophila abortus), this protein is Glucose-6-phosphate isomerase.